The primary structure comprises 72 residues: Omega-conotoxin-like S6.6 (72 aa).

An N-terminal signal peptide occupies residues 1-22 (MKLTCVVIVAVLLLTACQLLTA). Positions 23-45 (DDSRGTQKHRALRSDTKLSMSTR) are excised as a propeptide. Disulfide bonds link Cys-46-Cys-61, Cys-53-Cys-65, and Cys-60-Cys-71. At Cys-71 the chain carries Cysteine amide.

The protein belongs to the conotoxin O1 superfamily. In terms of tissue distribution, expressed by the venom duct.

The protein resides in the secreted. In terms of biological role, omega-conotoxins act at presynaptic membranes, they bind and block voltage-gated calcium channels (Cav). This toxin blocks N-, P- and Q-type calcium channels. The chain is Omega-conotoxin-like S6.6 from Conus striatus (Striated cone).